A 301-amino-acid polypeptide reads, in one-letter code: 2-(hydroxymethyl)glutarate dehydrogenase (301 aa).

Residues Gly8–Asn22 and Ser99 contribute to the NAD(+) site. The active site involves Lys174. Lys243 is an NAD(+) binding site.

The protein belongs to the HIBADH-related family. Homotetramer.

It catalyses the reaction (S)-2-hydroxymethylglutarate + NAD(+) = 2-formylglutarate + NADH + H(+). It participates in cofactor degradation; nicotinate degradation; propanoate and pyruvate from 6-hydroxynicotinate: step 3/8. Functionally, catalyzes the conversion of 2-formylglutarate to (S)-2-hydroxymethylglutarate. Has very low activity with (S)-3-hydroxyisobutyrate. The sequence is that of 2-(hydroxymethyl)glutarate dehydrogenase from Eubacterium barkeri (Clostridium barkeri).